The primary structure comprises 302 residues: Homoserine O-acetyltransferase 1 (302 aa).

The active-site Acyl-thioester intermediate is the Cys-142. Residues Lys-163 and Ser-192 each contribute to the substrate site. His-235 (proton acceptor) is an active-site residue. Glu-237 is a catalytic residue. Substrate is bound at residue Arg-249.

Belongs to the MetA family.

The protein resides in the cytoplasm. The catalysed reaction is L-homoserine + acetyl-CoA = O-acetyl-L-homoserine + CoA. The protein operates within amino-acid biosynthesis; L-methionine biosynthesis via de novo pathway; O-acetyl-L-homoserine from L-homoserine: step 1/1. Transfers an acetyl group from acetyl-CoA to L-homoserine, forming acetyl-L-homoserine. This chain is Homoserine O-acetyltransferase 1, found in Ilyobacter polytropus (strain ATCC 51220 / DSM 2926 / LMG 16218 / CuHBu1).